The primary structure comprises 526 residues: MSRVAIIDFGSQFTQLLARRIRELNVYSEIFPHDIAFDYIKDSKAFILSGGPKSVLDFTGMPPIVHDIIELNKKTSVPVLGVCYGLQLLSNYFNSTIVHGCGQEFGKAILNVVKKSEMIKDVWKVGDQPYVWMSHADSVYDTPCGFEVIACSVVNNAIAMISNEERRIYGVQFHPEVYHTPDGVKLLANFVRIAGCDNNWTVESFLDEQENLIKKQVGDKKVIAALSGGVDSSVAAALTYRAIGDQLHCIFIDNGLLRYNEAEKVRQSFVDQFQMPVTIVDRSSVFLDKLQFVTDPEQKRKIIGKTFIEVFEEEANKIGNVEFLMQGTIYPDVIESGGSVGKESVTIKSHHNVGGLPDIMKLQLVEPLKLLFKDEVRLLGKKLGISDEILMRHPFPGPGLAIRIIGEITQEKVNMLQAADEIYINLIKKYNLYDVIWQAFAVLLPVKTVGVMGDSRTYGYTCALRAVTSSDGMTAECFPFGVDLETKIIFYEFLQDVSNTIVNNVQGINRVVYDTTSKPPATIEWE.

Positions 3–199 (RVAIIDFGSQ…FVRIAGCDNN (197 aa)) constitute a Glutamine amidotransferase type-1 domain. The Nucleophile role is filled by C83. Residues H174 and E176 contribute to the active site. In terms of domain architecture, GMPS ATP-PPase spans 200-392 (WTVESFLDEQ…LGISDEILMR (193 aa)). 227–233 (SGGVDSS) contributes to the ATP binding site.

In terms of assembly, homodimer.

The catalysed reaction is XMP + L-glutamine + ATP + H2O = GMP + L-glutamate + AMP + diphosphate + 2 H(+). It functions in the pathway purine metabolism; GMP biosynthesis; GMP from XMP (L-Gln route): step 1/1. Catalyzes the synthesis of GMP from XMP. This Ehrlichia chaffeensis (strain ATCC CRL-10679 / Arkansas) protein is GMP synthase [glutamine-hydrolyzing].